Here is a 1093-residue protein sequence, read N- to C-terminus: Regulatory protein SWI4 (1093 aa).

Residues 37-147 form the HTH APSES-type domain; it reads IEIATYSETD…FQFDPNNPPP (111 aa). Positions 71–92 form a DNA-binding region, H-T-H motif; sequence ITQVFKIAQFSKTKRTKILEKE. Positions 138-210 are disordered; it reads FQFDPNNPPP…NQPNPSPLQN (73 aa). Residues 152–172 show a composition bias toward polar residues; sequence NSILRKTSPGTKITSPSSYNK. The span at 179 to 201 shows a compositional bias: low complexity; that stretch reads SSSSTSATTTAANKKGKKNASIN. Serine 255 is subject to Phosphoserine. A compositionally biased stretch (low complexity) spans 448–457; that stretch reads NSMNMSSRSM. Residues 448–468 form a disordered region; the sequence is NSMNMSSRSMTPFSAGNTSSQ. Over residues 458–468 the composition is skewed to polar residues; the sequence is TPFSAGNTSSQ. ANK repeat units lie at residues 520 to 549 and 641 to 670; these read QGHTPLHWATAMANIPLIKMLITLNANALQ and IGNTPLHLSALNLNFEVYNRLVYLGASTDI. Serine 806 is subject to Phosphoserine. Disordered stretches follow at residues 813 to 855 and 973 to 1017; these read RSQS…SSLL and QDEE…DAKF. Residues 818–837 show a composition bias toward basic and acidic residues; that stretch reads SDEKEKAKDNENQVEKKKDP. Residues 846 to 855 show a composition bias toward low complexity; sequence PSLESPSSLL. Residues 1000-1010 show a composition bias toward polar residues; it reads KSTSETSSPKN.

As to quaternary structure, component of the transcription complex SCB-binding factor (SBF) composed of SWI6 and SWI4. Interacts with MSA2.

Part of a complex involved in cell-cycle-dependent transcription. SWI4 and SWI6 are required for formation of the cell-cycle box factor-DNA complex. The repeated element in the upstream region of HO (5'-CACGAAAA-3') is called the cell cycle box (CCB). This Saccharomyces cerevisiae (strain ATCC 204508 / S288c) (Baker's yeast) protein is Regulatory protein SWI4 (SWI4).